We begin with the raw amino-acid sequence, 188 residues long: Elongation factor P (188 aa).

At Lys34 the chain carries N6-(3,6-diaminohexanoyl)-5-hydroxylysine.

It belongs to the elongation factor P family. Post-translationally, may be beta-lysylated on the epsilon-amino group of Lys-34 by the combined action of EpmA and EpmB, and then hydroxylated on the C5 position of the same residue by EpmC (if this protein is present). Lysylation is critical for the stimulatory effect of EF-P on peptide-bond formation. The lysylation moiety may extend toward the peptidyltransferase center and stabilize the terminal 3-CCA end of the tRNA. Hydroxylation of the C5 position on Lys-34 may allow additional potential stabilizing hydrogen-bond interactions with the P-tRNA.

The protein resides in the cytoplasm. Its pathway is protein biosynthesis; polypeptide chain elongation. In terms of biological role, involved in peptide bond synthesis. Alleviates ribosome stalling that occurs when 3 or more consecutive Pro residues or the sequence PPG is present in a protein, possibly by augmenting the peptidyl transferase activity of the ribosome. Modification of Lys-34 is required for alleviation. This is Elongation factor P from Erwinia tasmaniensis (strain DSM 17950 / CFBP 7177 / CIP 109463 / NCPPB 4357 / Et1/99).